The sequence spans 493 residues: Dipeptide permease D (493 aa).

13 consecutive transmembrane segments (helical) span residues 14-34 (VVAL…LLIL), 49-69 (ELFS…GYLA), 91-111 (LVLG…AIIV), 138-158 (GGFS…PIAC), 167-187 (WAMG…IFLC), 212-232 (NWGW…VLFW), 235-255 (WSVY…AKIY), 267-287 (LGLI…AQQG), 312-332 (MFQS…AWLV), 344-364 (IWGK…ILTL), 379-399 (LMVL…PVAM), 413-433 (VLTG…AGVI), and 458-478 (VFEQ…LIWL).

This sequence belongs to the major facilitator superfamily. Proton-dependent oligopeptide transporter (POT/PTR) (TC 2.A.17) family. DtpD subfamily.

It localises to the cell inner membrane. Its function is as follows. Probable proton-dependent permease that transports dipeptides. This chain is Dipeptide permease D, found in Salmonella paratyphi C (strain RKS4594).